The primary structure comprises 815 residues: MNIYRLSFVSCLVMAMPCAMAVEFNLNVLDKSMRDRIDISLLKEKGVIAPGEYFVSVAVNNNKISNGQKINWQKKGDKTIPCINDSLVDKFGLKPDIRQSLPQIDRCIDFSSRPEMLFNFDQANQQLNISIPQAWLAWHSENWAPPSTWKEGVAGVLMDYNLFASSYRPQDGSSSTNLNAYGTAGINAGAWRLRSDYQLNKTDSEDNHDQSGGISRTYLFRPLPQLGSKLTLGETDFSSNIFDGFSYTGAALASDDRMLPWELRGYAPQISGIAQTNATVTISQSGRVIYQKKVPPGPFIIDDLNQSVQGTLDVKVTEEDGRVNNFQVSAASTPFLTRQGQVRYKLAAGQPRPSMSHQTENETFFSNEVSWGMLSNTSLYGGLLISDDDYHSAAMGIGQNMLWLGALSFDVTWASSHFDTQQDERGLSYRFNYSKQVDATNSTISLAAYRFSDRHFHSYANYLDHKYNDSDAQDEKQTISLSVGQPITPLNLNLYANLLHQTWWNADASTTANITAGFNVDIGDWRDISISTSFNTTHYEDKDRDNQIYLSISLPFGNGGRVGYDMQNSSHSTIHRMSWNDTLDERNSWGMSAGLQSDRPDNGAQVSGNYQHLSSAGEWDISGTYAASDYSSVSSSWSGSFTATQYGAAFHRRSSTNEPRLMVSTDGVADIPVQGNLDYTNHFGIAVVPLISSYQPSTVAVNMNDLPDGVTVAENVIKETWIEGAIGYKSLASRSGKDVNVIIRNASGQFPPLGADIRQDDSGISVGMVGEEGHAWLSGVAENQLFTVVWGEQSCIIHLPERLEDTTKRLILPCH.

Positions 1–21 (MNIYRLSFVSCLVMAMPCAMA) are cleaved as a signal peptide. C795 and C814 are disulfide-bonded.

The protein belongs to the fimbrial export usher family.

It is found in the cell outer membrane. Functionally, could be involved in the export and assembly of the putative YbgD fimbrial subunit across the outer membrane. This is an uncharacterized protein from Escherichia coli (strain K12).